A 1362-amino-acid chain; its full sequence is Bromodomain-containing protein 4 (1362 aa).

The interval 1-58 is disordered; that stretch reads MSAESGPGTRLRNLPVMGDGLETSQMSTTQAQAQPQPANAASTNPPPPETSNPNKPKR. The segment covering 23–43 has biased composition (low complexity); that stretch reads TSQMSTTQAQAQPQPANAAST. Positions 58-164 constitute a Bromo 1 domain; it reads RQTNQLQYLL…KLFLQKINEL (107 aa). A Glycyl lysine isopeptide (Lys-Gly) (interchain with G-Cter in SUMO2) cross-link involves residue K99. 3 disordered regions span residues 174–229, 242–352, and 463–615; these read VQAK…PAVT, VPPQ…KVSE, and EPVV…YEEK. The segment covering 197 to 211 has biased composition (low complexity); sequence PNTTQASTPPQTQTP. Composition is skewed to pro residues over residues 212-227 and 243-266; these read QPNP…PFPA and PPQP…PAPQ. Residues 320–336 show a composition bias toward basic and acidic residues; sequence QRRESSRPVKPPKKDVP. In terms of domain architecture, Bromo 2 spans 348-457; it reads SKVSEQLKCC…DVFEMRFAKM (110 aa). S470 carries the post-translational modification Phosphoserine. The span at 478 to 497 shows a compositional bias: low complexity; it reads KVVAPPSSSDSSSDSSSDSD. Phosphoserine; by CK2 occurs at positions 484, 488, 492, 494, 498, 499, and 503. The segment at 484–503 is NPS region; it reads SSSDSSSDSSSDSDSSTDDS. Positions 524-579 are BID region; that stretch reads QLAALSQPQQNKPKKKEKDKKEKKKEKHKRKEEVEENKKSKAKEPPPKKTKKNNSS. The segment covering 535 to 553 has biased composition (basic residues); sequence KPKKKEKDKKEKKKEKHKR. Over residues 554–570 the composition is skewed to basic and acidic residues; the sequence is KEEVEENKKSKAKEPPP. K585 is covalently cross-linked (Glycyl lysine isopeptide (Lys-Gly) (interchain with G-Cter in SUMO2)). In terms of domain architecture, NET spans 600 to 682; the sequence is ESEEEDKCKP…SCLRKKRKPQ (83 aa). S601 is subject to Phosphoserine. The segment covering 605–615 has biased composition (basic and acidic residues); that stretch reads DKCKPMSYEEK. Residues K645 and K694 each participate in a glycyl lysine isopeptide (Lys-Gly) (interchain with G-Cter in SUMO2) cross-link. Residues 674–1100 are disordered; sequence CLRKKRKPQA…PKKQELRAAS (427 aa). Residues 699 to 712 are compositionally biased toward low complexity; sequence SSSESESSSESSSS. The span at 724-744 shows a compositional bias: basic residues; that stretch reads KSKKKGHPGREQKKHHHHHHQ. Composition is skewed to pro residues over residues 751-785, 833-846, and 881-890; these read APVP…PPSM, PELP…PEHS, and PPKPARPPAV. The span at 926 to 936 shows a compositional bias: low complexity; that stretch reads MQMQLYLQQLQ. Pro residues-rich tracts occupy residues 953–964, 973–996, and 1010–1034; these read QPPPPLPPPPHP, QPPP…PPRP, and QPPP…PQPA. Residues 1041–1050 show a composition bias toward basic residues; sequence QHHHSPRHHK. The tract at residues 1047–1362 is C-terminal (CTD) region; sequence RHHKSDPYST…LLSIFEENLF (316 aa). K1050 is covalently cross-linked (Glycyl lysine isopeptide (Lys-Gly) (interchain with G-Cter in SUMO2)). The segment covering 1071-1091 has biased composition (polar residues); the sequence is PQMSQFQSLTHQSPPQQNVQP. K1111 is modified (N6-acetyllysine; alternate). Residue K1111 forms a Glycyl lysine isopeptide (Lys-Gly) (interchain with G-Cter in SUMO1); alternate linkage. K1111 participates in a covalent cross-link: Glycyl lysine isopeptide (Lys-Gly) (interchain with G-Cter in SUMO2); alternate. Positions 1116 to 1339 are disordered; the sequence is HSPIIRSEPF…KREQERRRRE (224 aa). Phosphoserine is present on residues S1117 and S1126. The span at 1175–1196 shows a compositional bias: basic and acidic residues; that stretch reads PDKDKQKQEPKTPVAPKKDLKI. K1197 participates in a covalent cross-link: Glycyl lysine isopeptide (Lys-Gly) (interchain with G-Cter in SUMO2). Phosphoserine occurs at positions 1201 and 1204. The segment covering 1211 to 1223 has biased composition (low complexity); it reads TTPSSTAKSSSDS. Positions 1225-1284 are enriched in basic and acidic residues; the sequence is EQFRRAAREKEEREKALKAQAEHAEKEKERLRQERMRSREDEDALEQARRAHEEARRRQE. Residues 1285-1313 are compositionally biased toward low complexity; that stretch reads QQQQQRQEQQQQQQQQAAAVAAAATPQAQ. Residues 1323–1339 show a composition bias toward basic and acidic residues; the sequence is QQRELARKREQERRRRE.

This sequence belongs to the BET family. In terms of assembly, interacts with p53/TP53; the interaction is direct. Interacts (via CTD region) with CDK9 and CCNT1, acting as an associated component of P-TEFb complex. Interacts with RELA (when acetylated at 'Lys-310'). Interacts (via NET domain) with NSD3, CHD4, BICRA and ATAD5. The interaction with BICRA bridges BRD4 to the GBAF complex. Interacts (via NET domain) with JMJD6 (via JmjC and N-terminal domains); the interaction is stronger in presence of ssRNA and recruits JMJD6 on distal enhancers. Interacts with NSD3. Interacts with NIPBL. As to quaternary structure, interacts with SMC2. Interacts with NCAPD3. (Microbial infection) Interacts with bovine papillomavirus type 1 regulatory protein E2. This interactions may serve for the tethering of viral genomes to host mitotic chromosomes allowing successful partitioning of the viral genome during cell division. In terms of assembly, (Microbial infection) Interacts with Epstein-Barr virus (EBV) protein EBNA1; this interaction facilitates transcriptional activation by EBNA1. As to quaternary structure, (Microbial infection) Interacts with human herpes virus-8 (HHV-8) protein LANA. Phosphorylation by CK2 disrupt the intramolecular binding between the bromo domain 2 and the NPS region and promotes binding between the NPS and the BID regions, leading to activate the protein and promote binding to acetylated histones. In absence of phosphorylation, BRD4 does not localize to p53/TP53 target gene promoters, phosphorylation promoting recruitment to p53/TP53 target promoters. As to expression, ubiquitously expressed.

It localises to the nucleus. Its subcellular location is the chromosome. With respect to regulation, inhibited by JQ1, a thieno-triazolo-1,4-diazepine derivative, which specifically inhibits members of the BET family (BRD2, BRD3 and BRD4). The first bromo domain is inhibited by GSK778 (iBET-BD1), which specifically inhibits the first bromo domain of members of the BET family (BRD2, BRD3 and BRD4). The second bromo domain is inhibited by ABBV-744, which specifically inhibits the second bromo domain of members of the BET family (BRD2, BRD3 and BRD4). The second bromo domain is inhibited by GSK046 (iBET-BD2), which specifically inhibits the second bromo domain of members of the BET family (BRD2, BRD3 and BRD4). Functionally, chromatin reader protein that recognizes and binds acetylated histones and plays a key role in transmission of epigenetic memory across cell divisions and transcription regulation. Remains associated with acetylated chromatin throughout the entire cell cycle and provides epigenetic memory for postmitotic G1 gene transcription by preserving acetylated chromatin status and maintaining high-order chromatin structure. During interphase, plays a key role in regulating the transcription of signal-inducible genes by associating with the P-TEFb complex and recruiting it to promoters. Also recruits P-TEFb complex to distal enhancers, so called anti-pause enhancers in collaboration with JMJD6. BRD4 and JMJD6 are required to form the transcriptionally active P-TEFb complex by displacing negative regulators such as HEXIM1 and 7SKsnRNA complex from P-TEFb, thereby transforming it into an active form that can then phosphorylate the C-terminal domain (CTD) of RNA polymerase II. Regulates differentiation of naive CD4(+) T-cells into T-helper Th17 by promoting recruitment of P-TEFb to promoters. Promotes phosphorylation of 'Ser-2' of the C-terminal domain (CTD) of RNA polymerase II. According to a report, directly acts as an atypical protein kinase and mediates phosphorylation of 'Ser-2' of the C-terminal domain (CTD) of RNA polymerase II; these data however need additional evidences in vivo. In addition to acetylated histones, also recognizes and binds acetylated RELA, leading to further recruitment of the P-TEFb complex and subsequent activation of NF-kappa-B. Also acts as a regulator of p53/TP53-mediated transcription: following phosphorylation by CK2, recruited to p53/TP53 specific target promoters. Acts as a chromatin insulator in the DNA damage response pathway. Inhibits DNA damage response signaling by recruiting the condensin-2 complex to acetylated histones, leading to chromatin structure remodeling, insulating the region from DNA damage response by limiting spreading of histone H2AX/H2A.x phosphorylation. In Homo sapiens (Human), this protein is Bromodomain-containing protein 4 (BRD4).